Reading from the N-terminus, the 309-residue chain is Protein MAK16 homolog (309 aa).

Positions E194–N309 are disordered. Composition is skewed to acidic residues over residues A195–D227 and V235–E270. The segment covering I275 to R293 has biased composition (basic residues). A compositionally biased stretch (acidic residues) spans E299–N309.

This sequence belongs to the MAK16 family.

Its subcellular location is the nucleus. It localises to the nucleolus. This chain is Protein MAK16 homolog (mak16l), found in Dictyostelium discoideum (Social amoeba).